The primary structure comprises 437 residues: Ribosomal protein uS12 methylthiotransferase RimO (437 aa).

The MTTase N-terminal domain maps to 3-118 (KKFYITTLGC…AGKILREKFP (116 aa)). [4Fe-4S] cluster-binding residues include C12, C48, C81, C157, C161, and C164. Positions 143-370 (NYSKPYAYVK…RDSHLEILEE (228 aa)) constitute a Radical SAM core domain. The region spanning 373–437 (ESRIGRTYDA…YEYDMNGTWV (65 aa)) is the TRAM domain.

Belongs to the methylthiotransferase family. RimO subfamily. The cofactor is [4Fe-4S] cluster.

It localises to the cytoplasm. It catalyses the reaction L-aspartate(89)-[ribosomal protein uS12]-hydrogen + (sulfur carrier)-SH + AH2 + 2 S-adenosyl-L-methionine = 3-methylsulfanyl-L-aspartate(89)-[ribosomal protein uS12]-hydrogen + (sulfur carrier)-H + 5'-deoxyadenosine + L-methionine + A + S-adenosyl-L-homocysteine + 2 H(+). Catalyzes the methylthiolation of an aspartic acid residue of ribosomal protein uS12. This chain is Ribosomal protein uS12 methylthiotransferase RimO, found in Leptospira interrogans serogroup Icterohaemorrhagiae serovar Lai (strain 56601).